We begin with the raw amino-acid sequence, 552 residues long: Non-structural protein NS1 (552 aa).

This sequence belongs to the orbivirus non-structural protein NS1 family.

In Bluetongue virus 13 (isolate USA) (BTV 13), this protein is Non-structural protein NS1 (Segment-5).